Reading from the N-terminus, the 402-residue chain is NADH-quinone oxidoreductase subunit D (402 aa).

It belongs to the complex I 49 kDa subunit family. In terms of assembly, NDH-1 is composed of 14 different subunits. Subunits NuoB, C, D, E, F, and G constitute the peripheral sector of the complex.

The protein resides in the cell inner membrane. It catalyses the reaction a quinone + NADH + 5 H(+)(in) = a quinol + NAD(+) + 4 H(+)(out). In terms of biological role, NDH-1 shuttles electrons from NADH, via FMN and iron-sulfur (Fe-S) centers, to quinones in the respiratory chain. The immediate electron acceptor for the enzyme in this species is believed to be ubiquinone. Couples the redox reaction to proton translocation (for every two electrons transferred, four hydrogen ions are translocated across the cytoplasmic membrane), and thus conserves the redox energy in a proton gradient. This Cereibacter sphaeroides (strain ATCC 17029 / ATH 2.4.9) (Rhodobacter sphaeroides) protein is NADH-quinone oxidoreductase subunit D.